A 651-amino-acid polypeptide reads, in one-letter code: DNA ligase (651 aa).

NAD(+) contacts are provided by residues 30–34 (DEEYD), 79–80 (SM), and E105. The N6-AMP-lysine intermediate role is filled by K107. Positions 128, 162, and 301 each coordinate NAD(+). Residues C395, C398, C411, and C416 each contribute to the Zn(2+) site. A BRCT domain is found at 570 to 651 (ALNENISNKT…NALLGGDDEV (82 aa)).

This sequence belongs to the NAD-dependent DNA ligase family. LigA subfamily. Requires Mg(2+) as cofactor. Mn(2+) serves as cofactor.

The enzyme catalyses NAD(+) + (deoxyribonucleotide)n-3'-hydroxyl + 5'-phospho-(deoxyribonucleotide)m = (deoxyribonucleotide)n+m + AMP + beta-nicotinamide D-nucleotide.. DNA ligase that catalyzes the formation of phosphodiester linkages between 5'-phosphoryl and 3'-hydroxyl groups in double-stranded DNA using NAD as a coenzyme and as the energy source for the reaction. It is essential for DNA replication and repair of damaged DNA. This chain is DNA ligase, found in Campylobacter lari (strain RM2100 / D67 / ATCC BAA-1060).